The sequence spans 351 residues: Phosphoribosylformylglycinamidine cyclo-ligase (351 aa).

It belongs to the AIR synthase family.

The protein resides in the cytoplasm. The enzyme catalyses 2-formamido-N(1)-(5-O-phospho-beta-D-ribosyl)acetamidine + ATP = 5-amino-1-(5-phospho-beta-D-ribosyl)imidazole + ADP + phosphate + H(+). The protein operates within purine metabolism; IMP biosynthesis via de novo pathway; 5-amino-1-(5-phospho-D-ribosyl)imidazole from N(2)-formyl-N(1)-(5-phospho-D-ribosyl)glycinamide: step 2/2. The sequence is that of Phosphoribosylformylglycinamidine cyclo-ligase from Oleidesulfovibrio alaskensis (strain ATCC BAA-1058 / DSM 17464 / G20) (Desulfovibrio alaskensis).